A 197-amino-acid chain; its full sequence is Recombination protein RecR (197 aa).

The C4-type zinc finger occupies 57 to 72 (CSTCFGITESDPCHLC). In terms of domain architecture, Toprim spans 79 to 174 (ASICVVEEPQ…KVTRLAHGIP (96 aa)).

Belongs to the RecR family.

Functionally, may play a role in DNA repair. It seems to be involved in an RecBC-independent recombinational process of DNA repair. It may act with RecF and RecO. The sequence is that of Recombination protein RecR from Geotalea uraniireducens (strain Rf4) (Geobacter uraniireducens).